A 64-amino-acid polypeptide reads, in one-letter code: MPKMKTHSGAKKRFKLTGSGKLKRQQANRRHYLEHKPSTLTRRLAADKTVSPADAKNIKKMLGI.

The disordered stretch occupies residues 1-28 (MPKMKTHSGAKKRFKLTGSGKLKRQQAN).

Belongs to the bacterial ribosomal protein bL35 family.

The protein is Large ribosomal subunit protein bL35 of Renibacterium salmoninarum (strain ATCC 33209 / DSM 20767 / JCM 11484 / NBRC 15589 / NCIMB 2235).